Here is a 293-residue protein sequence, read N- to C-terminus: Heterogeneous nuclear ribonucleoprotein C-like 4 (293 aa).

The RRM domain maps to Ser16–Glu87. Disordered regions lie at residues Val140–Gly177 and His208–Ser293. A coiled-coil region spans residues Gly177 to His208. Basic and acidic residues-rich tracts occupy residues His208–Glu222 and Ser229–Ser240. The span at Gly242 to Gly263 shows a compositional bias: acidic residues. Positions Leu269–Ser293 are enriched in basic and acidic residues.

The protein belongs to the RRM HNRPC family. RALY subfamily.

It localises to the nucleus. The polypeptide is Heterogeneous nuclear ribonucleoprotein C-like 4 (Homo sapiens (Human)).